Consider the following 253-residue polypeptide: Triosephosphate isomerase (253 aa).

Substrate is bound by residues asparagine 12 and lysine 14. The active-site Electrophile is the histidine 96. The active-site Proton acceptor is glutamate 169.

It belongs to the triosephosphate isomerase family. Homodimer.

It is found in the cytoplasm. It carries out the reaction D-glyceraldehyde 3-phosphate = dihydroxyacetone phosphate. Its pathway is carbohydrate biosynthesis; gluconeogenesis. It functions in the pathway carbohydrate degradation; glycolysis; D-glyceraldehyde 3-phosphate from glycerone phosphate: step 1/1. In terms of biological role, antigen to the host M.1 monoclonal antibody. This is Triosephosphate isomerase (TPI) from Schistosoma mansoni (Blood fluke).